Here is a 103-residue protein sequence, read N- to C-terminus: Large ribosomal subunit protein bL21 (103 aa).

This sequence belongs to the bacterial ribosomal protein bL21 family. Part of the 50S ribosomal subunit. Contacts protein L20.

In terms of biological role, this protein binds to 23S rRNA in the presence of protein L20. The polypeptide is Large ribosomal subunit protein bL21 (Vibrio atlanticus (strain LGP32) (Vibrio splendidus (strain Mel32))).